The following is a 512-amino-acid chain: UDP-N-acetylmuramate--L-alanine ligase (512 aa).

An ATP-binding site is contributed by 132-138; the sequence is GAHGKTT.

Belongs to the MurCDEF family.

It localises to the cytoplasm. The enzyme catalyses UDP-N-acetyl-alpha-D-muramate + L-alanine + ATP = UDP-N-acetyl-alpha-D-muramoyl-L-alanine + ADP + phosphate + H(+). It functions in the pathway cell wall biogenesis; peptidoglycan biosynthesis. Cell wall formation. The protein is UDP-N-acetylmuramate--L-alanine ligase of Bifidobacterium longum (strain NCC 2705).